The chain runs to 1095 residues: Solute carrier family 12 member 1 (1095 aa).

Topologically, residues 1 to 173 (MSVNIPSNSV…EEDVTGVVKF (173 aa)) are cytoplasmic. The RFXV motif signature appears at 16-19 (RFQV). Residues 26 to 45 (HGSGAAMSDSTDPPHYEETS) form a disordered region. Ser-57 and Ser-87 each carry phosphoserine. Residues Thr-91, Thr-96, Thr-101, and Thr-114 each carry the phosphothreonine modification. At Ser-116 the chain carries Phosphoserine. Ser-126 is subject to Phosphoserine; by AMPK. Ser-144 is subject to Phosphoserine. Residues 174-194 (GWVKGVLVRCMLNIWGVMLFI) traverse the membrane as a helical segment. The Extracellular segment spans residues 195-197 (RLS). Residues 198–218 (WIVGEAGIGLGVIIIGLSVVV) form a helical membrane-spanning segment. Topologically, residues 219–255 (TTLTGISMSAICTNGVVRGGGAYYLISRSLGPEFGGS) are cytoplasmic. The helical transmembrane segment at 256 to 276 (IGLIFRFANAVRVAMYVVGFA) threads the bilayer. Over 277–298 (ETVVDLLKESDSMMVDPTNDIR) the chain is Extracellular. Residues 299 to 319 (IIGSITVVILLGISVAGMEWE) form a helical membrane-spanning segment. Over 320–323 (AKAQ) the chain is Cytoplasmic. Residues 324–344 (VILLVILLIGIANFFIGTVIP) form a helical membrane-spanning segment. Residues 345-375 (SNNEKKSRGFFNYQASIFAENFGPSFTEGEG) are Extracellular-facing. The helical transmembrane segment at 376 to 396 (FFSVFAIFFPAATGILAGANI) threads the bilayer. Over 397–413 (SGDLEDPQDAIPRGTML) the chain is Cytoplasmic. Residues 414–434 (AIFITTVAYIGVAICVRACVV) form a helical membrane-spanning segment. The Extracellular segment spans residues 435 to 546 (RDATGSMNDT…NNEPLRGYFL (112 aa)). Residues Asn-442 and Asn-452 are each glycosylated (N-linked (GlcNAc...) asparagine). Helical transmembrane passes span 547–567 (TFVI…APII) and 568–588 (SNFF…ASYA). The Extracellular segment spans residues 589–605 (KSPGWRPAYGIYNMWVS). A helical membrane pass occupies residues 606-626 (LFGAILCCAVMFVINWWAAVI). Residues 627–1095 (TYVIELFLYI…NHKNVLTFYS (469 aa)) lie on the Cytoplasmic side of the membrane.

The protein belongs to the SLC12A transporter family. When phosphorylated, interacts with PPP3CB. Phosphorylated at Ser-87, Thr-96 and Thr-101 by OXSR1/OSR1 and STK39/SPAK downstream of WNK kinases (WNK1, WNK2, WNK3 or WNK4), promoting its activity. As to expression, expressed predominantly in kidney (at protein level).

It localises to the apical cell membrane. The catalysed reaction is K(+)(out) + 2 chloride(out) + Na(+)(out) = K(+)(in) + 2 chloride(in) + Na(+)(in). Its activity is regulated as follows. Activated following phosphorylation by OXSR1/OSR1 and STK39/SPAK downstream of WNK kinases (WNK1, WNK2, WNK3 or WNK4). Renal sodium, potassium and chloride ion cotransporter that mediates the transepithelial NaCl reabsorption in the thick ascending limb and plays an essential role in the urinary concentration and volume regulation. Electrically silent transporter system. The polypeptide is Solute carrier family 12 member 1 (Slc12a1) (Rattus norvegicus (Rat)).